The following is a 571-amino-acid chain: Pectinesterase/pectinesterase inhibitor (571 aa).

The segment at 27–178 is pectinesterase inhibitor; the sequence is NSHQKAVESL…KILSSNAIDI (152 aa). A disordered region spans residues 233-254; that stretch reads AQAGRPGAPADEGIGEGGGGGG. The tract at residues 259-558 is pectinesterase; that stretch reads THVVAKDGSG…TVANWLTPAN (300 aa). Substrate is bound by residues Thr336 and Gln366. Asp389 serves as the catalytic Proton donor; for pectinesterase activity. Asp410 functions as the Nucleophile; for pectinesterase activity in the catalytic mechanism. The substrate site is built by Arg479 and Trp481.

The protein in the N-terminal section; belongs to the PMEI family. It in the C-terminal section; belongs to the pectinesterase family.

It localises to the secreted. Its subcellular location is the cell wall. The enzyme catalyses [(1-&gt;4)-alpha-D-galacturonosyl methyl ester](n) + n H2O = [(1-&gt;4)-alpha-D-galacturonosyl](n) + n methanol + n H(+). Its pathway is glycan metabolism; pectin degradation; 2-dehydro-3-deoxy-D-gluconate from pectin: step 1/5. Functionally, acts in the modification of cell walls via demethylesterification of cell wall pectin. The sequence is that of Pectinesterase/pectinesterase inhibitor from Brassica campestris (Field mustard).